Consider the following 265-residue polypeptide: Phosphatidylserine decarboxylase proenzyme (265 aa).

The active-site Schiff-base intermediate with substrate; via pyruvic acid is serine 183. Serine 183 is subject to Pyruvic acid (Ser); by autocatalysis. The tract at residues 216–246 (TAPQTESEPESEPALQTAPVETAANPSAEQR) is disordered.

This sequence belongs to the phosphatidylserine decarboxylase family. PSD-A subfamily. Heterodimer of a large membrane-associated beta subunit and a small pyruvoyl-containing alpha subunit. Requires pyruvate as cofactor. In terms of processing, is synthesized initially as an inactive proenzyme. Formation of the active enzyme involves a self-maturation process in which the active site pyruvoyl group is generated from an internal serine residue via an autocatalytic post-translational modification. Two non-identical subunits are generated from the proenzyme in this reaction, and the pyruvate is formed at the N-terminus of the alpha chain, which is derived from the carboxyl end of the proenzyme. The post-translation cleavage follows an unusual pathway, termed non-hydrolytic serinolysis, in which the side chain hydroxyl group of the serine supplies its oxygen atom to form the C-terminus of the beta chain, while the remainder of the serine residue undergoes an oxidative deamination to produce ammonia and the pyruvoyl prosthetic group on the alpha chain.

The protein resides in the cell membrane. It catalyses the reaction a 1,2-diacyl-sn-glycero-3-phospho-L-serine + H(+) = a 1,2-diacyl-sn-glycero-3-phosphoethanolamine + CO2. It participates in phospholipid metabolism; phosphatidylethanolamine biosynthesis; phosphatidylethanolamine from CDP-diacylglycerol: step 2/2. Its function is as follows. Catalyzes the formation of phosphatidylethanolamine (PtdEtn) from phosphatidylserine (PtdSer). The protein is Phosphatidylserine decarboxylase proenzyme of Neisseria meningitidis serogroup B (strain ATCC BAA-335 / MC58).